The primary structure comprises 319 residues: MKRIGVLTSGGDSPGMNAAVRAVVRKAIYHDVEVYGIYNGYSGLISGKIEKLEIGSVGDIIHRGGTKLYTARCPEFKTVEGREKGIANLKKYGIEGLVVIGGDGSYMGAKKLTEHGFPCVGVPGTIDNDIPGTDLTIGFDTALNTVIDAIDKIRDTATSHERTYVIEVMGRHAGDIALWSGLAGGAESILIPEADYDMEEIIARLKRGHERGKKHSIIIVAEGVGSGVEFGKRIEEATNLETRVSVLGHIQRGGSPTAADRVLASRLGAFAVELLLEGKGGRCVGIQNNQLVHHDIIEILEQKHTIDQSMYRLSQELSI.

Gly-11 contributes to the ATP binding site. Arg-21–Arg-25 contacts ADP. Residues Arg-72–Cys-73 and Gly-102–Ser-105 contribute to the ATP site. Asp-103 is a Mg(2+) binding site. Residue Thr-125–Asp-127 participates in substrate binding. Catalysis depends on Asp-127, which acts as the Proton acceptor. Arg-154 contributes to the ADP binding site. Residues Arg-162 and Met-169 to Arg-171 contribute to the substrate site. ADP is bound by residues Gly-185–Glu-187, Arg-211, and Lys-213–His-215. Residues Glu-222, Arg-243, and His-249 to Arg-252 each bind substrate.

The protein belongs to the phosphofructokinase type A (PFKA) family. ATP-dependent PFK group I subfamily. Prokaryotic clade 'B1' sub-subfamily. Homotetramer. Mg(2+) is required as a cofactor.

It localises to the cytoplasm. It catalyses the reaction beta-D-fructose 6-phosphate + ATP = beta-D-fructose 1,6-bisphosphate + ADP + H(+). It participates in carbohydrate degradation; glycolysis; D-glyceraldehyde 3-phosphate and glycerone phosphate from D-glucose: step 3/4. With respect to regulation, allosterically activated by ADP and other diphosphonucleosides, and allosterically inhibited by phosphoenolpyruvate. Functionally, catalyzes the phosphorylation of D-fructose 6-phosphate to fructose 1,6-bisphosphate by ATP, the first committing step of glycolysis. This chain is ATP-dependent 6-phosphofructokinase, found in Bacillus licheniformis (strain ATCC 14580 / DSM 13 / JCM 2505 / CCUG 7422 / NBRC 12200 / NCIMB 9375 / NCTC 10341 / NRRL NRS-1264 / Gibson 46).